A 453-amino-acid polypeptide reads, in one-letter code: Carbamoyl phosphate synthase arginine-specific small chain (453 aa).

A mitochondrion-targeting transit peptide spans 1-28 (MFARVFKAMPARASALTSVNASIPARFM). Positions 219-406 (HVAVIDCGVK…IDSVKKYKAS (188 aa)) constitute a Glutamine amidotransferase type-1 domain. The active-site Nucleophile is Cys295. Residues His379 and Glu381 contribute to the active site.

It belongs to the CarA family. Heterodimer composed of 2 chains; the small (or glutamine) chain promotes the hydrolysis of glutamine to ammonia, which is used by the large (or ammonia) chain to synthesize carbamoyl phosphate.

The protein localises to the mitochondrion matrix. It catalyses the reaction hydrogencarbonate + L-glutamine + 2 ATP + H2O = carbamoyl phosphate + L-glutamate + 2 ADP + phosphate + 2 H(+). The enzyme catalyses L-glutamine + H2O = L-glutamate + NH4(+). It participates in amino-acid biosynthesis; L-arginine biosynthesis; carbamoyl phosphate from bicarbonate: step 1/1. In terms of biological role, small subunit of the arginine-specific carbamoyl phosphate synthase (CPSase). CPSase catalyzes the formation of carbamoyl phosphate from the ammonia moiety of glutamine, carbonate, and phosphate donated by ATP, the first step of the arginine biosynthetic pathway. The small subunit (glutamine amidotransferase) binds and cleaves glutamine to supply the large subunit with the substrate ammonia. The protein is Carbamoyl phosphate synthase arginine-specific small chain (cpa1) of Aspergillus fumigatus (strain ATCC MYA-4609 / CBS 101355 / FGSC A1100 / Af293) (Neosartorya fumigata).